The following is a 354-amino-acid chain: 4-hydroxy-2-oxovalerate aldolase 5 (354 aa).

In terms of domain architecture, Pyruvate carboxyltransferase spans 11-263 (VTVHDMCLRD…ETGCDLFKLM (253 aa)). 19 to 20 (RD) contacts substrate. Aspartate 20 contributes to the Mn(2+) binding site. Histidine 23 serves as the catalytic Proton acceptor. Residues serine 173 and histidine 202 each coordinate substrate. Mn(2+) contacts are provided by histidine 202 and histidine 204. Position 293 (tyrosine 293) interacts with substrate.

The protein belongs to the 4-hydroxy-2-oxovalerate aldolase family.

The enzyme catalyses (S)-4-hydroxy-2-oxopentanoate = acetaldehyde + pyruvate. The protein is 4-hydroxy-2-oxovalerate aldolase 5 of Dechloromonas aromatica (strain RCB).